Here is a 170-residue protein sequence, read N- to C-terminus: Shikimate kinase (170 aa).

11-16 lines the ATP pocket; that stretch reads LSGKST. Serine 15 contributes to the Mg(2+) binding site. Substrate is bound by residues aspartate 33, arginine 57, and glycine 79. Arginine 119 serves as a coordination point for ATP. Residue arginine 137 coordinates substrate.

It belongs to the shikimate kinase family. As to quaternary structure, monomer. It depends on Mg(2+) as a cofactor.

It localises to the cytoplasm. It carries out the reaction shikimate + ATP = 3-phosphoshikimate + ADP + H(+). It functions in the pathway metabolic intermediate biosynthesis; chorismate biosynthesis; chorismate from D-erythrose 4-phosphate and phosphoenolpyruvate: step 5/7. Its function is as follows. Catalyzes the specific phosphorylation of the 3-hydroxyl group of shikimic acid using ATP as a cosubstrate. In Clostridium botulinum (strain Okra / Type B1), this protein is Shikimate kinase.